We begin with the raw amino-acid sequence, 74 residues long: Pelophylaxin-2 (74 aa).

An N-terminal signal peptide occupies residues 1–22 (MFTMKKSLLFFFFLGTIALSLC). Residues 23 to 42 (EEERGADEEENGAEITDEEV) constitute a propeptide that is removed on maturation. C68 and C74 form a disulfide bridge.

Expressed by the skin glands.

The protein resides in the secreted. Functionally, antimicrobial peptide. This is Pelophylaxin-2 from Pelophylax fukienensis (Fukien gold-striped pond frog).